The primary structure comprises 413 residues: Putative tRNA pseudouridine synthase C16C4.06c (413 aa).

Asp-96 acts as the Nucleophile in catalysis. Tyr-154 provides a ligand contact to substrate.

This sequence belongs to the tRNA pseudouridine synthase TruA family.

Its subcellular location is the cytoplasm. It localises to the nucleus. The catalysed reaction is a uridine in tRNA = a pseudouridine in tRNA. This is Putative tRNA pseudouridine synthase C16C4.06c from Schizosaccharomyces pombe (strain 972 / ATCC 24843) (Fission yeast).